The chain runs to 1402 residues: Baculoviral IAP repeat-containing protein 1g (1402 aa).

BIR repeat units follow at residues 60–127 (EAKR…CEFL), 159–227 (EEAR…CEFL), and 278–345 (EELR…CVFL). Zn(2+)-binding residues include Cys315, Cys318, His335, and Cys342. One can recognise an NACHT domain in the interval 464 to 759 (SVMCVEGEAG…EFLAAVRLTE (296 aa)). Lys476 is a binding site for ATP.

Its function is as follows. Prevents motor-neuron apoptosis induced by a variety of signals. The polypeptide is Baculoviral IAP repeat-containing protein 1g (Naip7) (Mus musculus (Mouse)).